The primary structure comprises 171 residues: Co-chaperone protein HscB (171 aa).

The region spanning 2 to 74 (DYFTLFGLPA…LTRAEYLLSL (73 aa)) is the J domain.

Belongs to the HscB family. Interacts with HscA and stimulates its ATPase activity. Interacts with IscU.

Co-chaperone involved in the maturation of iron-sulfur cluster-containing proteins. Seems to help targeting proteins to be folded toward HscA. The protein is Co-chaperone protein HscB of Salmonella arizonae (strain ATCC BAA-731 / CDC346-86 / RSK2980).